The following is a 492-amino-acid chain: Fumarate hydratase 1, mitochondrial (492 aa).

The N-terminal 28 residues, Met-1–Tyr-28, are a transit peptide targeting the mitochondrion. Substrate contacts are provided by residues Ser-127–Thr-129, His-157–Asp-160, Ser-167–Asn-169, and Thr-215. Residue His-216 is the Proton donor/acceptor of the active site. Ser-346 is an active-site residue. Substrate contacts are provided by residues Ser-347 and Lys-352–Asn-354.

The protein belongs to the class-II fumarase/aspartase family. Fumarase subfamily. Homotetramer.

It localises to the mitochondrion. It carries out the reaction (S)-malate = fumarate + H2O. It functions in the pathway carbohydrate metabolism; tricarboxylic acid cycle; (S)-malate from fumarate: step 1/1. Its activity is regulated as follows. Fumarate hydratase activity (fumarate to L-malate) is strongly inhibited by phosphoenolpyruvate, citrate, oxaloacetate, ATP and ADP. Malate dehydratase activity (malate to fumarate) is activated by oxaloacetate, pyruvate, Asn and Gln. Malate dehydratase activity (malate to fumarate) is inhibited by citrate, succinate, ADP, ATP, glucose-6P and phosphoenolpyruvate. In terms of biological role, catalyzes the reversible stereospecific interconversion of fumarate to L-malate. Catalyzes the hydration of fumarate to L-malate in the tricarboxylic acid (TCA) cycle to facilitate a transition step in the production of energy in the form of NADH. The chain is Fumarate hydratase 1, mitochondrial from Arabidopsis thaliana (Mouse-ear cress).